The following is a 209-amino-acid chain: Glutathione S-transferase D1 (209 aa).

The region spanning 1 to 81 is the GST N-terminal domain; it reads MVDFYYLPGS…YLVEKYGKTD (81 aa). Residues S10, 51–53, and 65–67 contribute to the glutathione site; these read HTI and ESR. A GST C-terminal domain is found at 87–208; sequence CPKKRAVINQ…AGCLEFKKYF (122 aa).

It belongs to the GST superfamily. Delta family. Homodimer.

The enzyme catalyses RX + glutathione = an S-substituted glutathione + a halide anion + H(+). It carries out the reaction 1,1,1-trichloro-2,2-bis(4-chlorophenyl)ethane = 1,1-dichloro-2,2-bis(4-chlorophenyl)ethylene + chloride + H(+). Functionally, conjugation of reduced glutathione to a wide number of exogenous and endogenous hydrophobic electrophiles. Has DDT dehydrochlorinase activity. May be involved in detoxification. In Drosophila melanogaster (Fruit fly), this protein is Glutathione S-transferase D1.